An 85-amino-acid chain; its full sequence is Small ribosomal subunit protein uS15c (85 aa).

Belongs to the universal ribosomal protein uS15 family. As to quaternary structure, part of the 30S ribosomal subunit.

Its subcellular location is the plastid. It localises to the chloroplast. This is Small ribosomal subunit protein uS15c (rps15) from Chaetosphaeridium globosum (Charophycean green alga).